Consider the following 569-residue polypeptide: F-box/WD repeat-containing protein 5 (569 aa).

Positions 3–49 constitute an F-box domain; sequence EGGMPLLPDSLVYQIFLSLGPADVLAAGLVCRQWQAVSRDEFLWREQ. The WD 1 repeat unit spans residues 90–129; the sequence is EHTDQVLHLSFSHSGYQFASCSKDCTVKIWNNDLTISLLH. Phosphoserine; by PLK4 is present on serine 151. The D-box motif lies at 308-316; the sequence is RRVFDSVLD. WD repeat units follow at residues 470–509 and 511–551; these read TPND…CLAK and RHED…RVLQ.

The protein belongs to the FBXW5 family. In terms of assembly, part of the SCF (SKP1-CUL1-F-box) E3 ubiquitin-protein ligase complex SCF(FBXW5) composed of CUL1, SKP1, RBX1 and FBXW5. Component of the DCX(FBXW5) E3 ubiquitin ligase complex, at least composed of (CUL4A or CUL4B), DDB1, FBXW5 and RBX1. Interacts with CDC20, EPS8, TSC1, TSC2 and SASS6. Interacts with TNFAIP8L1; TNFAIP8L1 competes with TSC2 to bind FBXW5 increasing TSC2 stability by preventing its ubiquitination. Phosphorylated at Ser-151 by PLK4 during the G1/S transition, leading to inhibit its ability to ubiquitinate SASS6. In terms of processing, ubiquitinated and degraded by the APC/C complex during mitosis and G1 phase.

It localises to the cytoplasm. Its pathway is protein modification; protein ubiquitination. In terms of biological role, substrate recognition component of both SCF (SKP1-CUL1-F-box protein) and DCX (DDB1-CUL4-X-box) E3 ubiquitin-protein ligase complexes. Substrate recognition component of the SCF(FBXW5) E3 ubiquitin-protein ligase complex which mediates the ubiquitination and subsequent proteasomal degradation of SASS6 during S phase, leading to prevent centriole reduplication. The SCF(FBXW5) complex also mediates ubiquitination and degradation of actin-regulator EPS8 during G2 phase, leading to the transient degradation of EPS8 and subsequent cell shape changes required to allow mitotic progression. Substrate-specific adapter of the DCX(FBXW5) E3 ubiquitin-protein ligase complex which mediates the polyubiquitination and subsequent degradation of TSC2. May also act as a negative regulator of MAP3K7/TAK1 signaling in the interleukin-1B (IL1B) signaling pathway. This chain is F-box/WD repeat-containing protein 5 (Fbxw5), found in Rattus norvegicus (Rat).